Consider the following 185-residue polypeptide: Protein LPA2 (185 aa).

Residues 1–46 constitute a chloroplast transit peptide; sequence MALQIHSPCSFSTRPYHLFFTTRNPRFAIKCQNSQIESDTTEDPSR. The segment at 35 to 105 is disordered; that stretch reads QIESDTTEDP…VFMSEEGAAK (71 aa). Residues 47 to 75 show a composition bias toward low complexity; that stretch reads SKNSSSSGVGFGSPASSSSPAKKLSAATS. Residues 83-92 are compositionally biased toward basic and acidic residues; sequence KREVNRRAPV. 2 consecutive transmembrane segments (helical) span residues 115–135 and 152–172; these read AFLLTWLGLGIVILIEGIILA and VYPVFTPSVVLFVAGTTAYGV.

Its subcellular location is the plastid. The protein localises to the chloroplast membrane. The polypeptide is Protein LPA2 (Arabidopsis thaliana (Mouse-ear cress)).